The following is a 456-amino-acid chain: Putrescine--pyruvate aminotransferase (456 aa).

Tyrosine 156 provides a ligand contact to substrate. Aspartate 262 serves as a coordination point for pyridoxal 5'-phosphate. Residue lysine 291 is modified to N6-(pyridoxal phosphate)lysine. Substrate contacts are provided by glycine 322 and arginine 417.

The protein belongs to the class-III pyridoxal-phosphate-dependent aminotransferase family. Pyridoxal 5'-phosphate is required as a cofactor.

It catalyses the reaction putrescine + pyruvate = 4-aminobutanal + L-alanine. It functions in the pathway amine and polyamine degradation; putrescine degradation; 4-aminobutanal from putrescine (transaminase route). Involved in the putrescine catabolism. Catalyzes the transfer of the amino group from putrescine to pyruvate to yield 4-aminobutanal and alanine. In Pseudomonas aeruginosa (strain ATCC 15692 / DSM 22644 / CIP 104116 / JCM 14847 / LMG 12228 / 1C / PRS 101 / PAO1), this protein is Putrescine--pyruvate aminotransferase.